The chain runs to 451 residues: MGRRYFGTDGIRGTVGEAPITPDFVLRLGYAAGKVLAGTADVAAGARPTVLIGKDTRVSGYMLEAALEAGFSAAGVDVMLAGPMPTPGVAYLTRALRLSAGVVISASHNPYQDNGIKFFSADGNKLPDETEAAIEAWLDKPLECASSDRLGKARRLEDAAGRYIEFCKSTFPAAYDLRGLKLVIDCAHGAAYQIAPHVFHELGADVIPIGVAPNGFNINDGVGATAPDALVRAVRANHADLGIALDGDADRLQVVDSTGRLYNGDELLYVLVKDRIATAGKVDGAVGTLMTNLAVEVALQREGVPFVRAAVGDRYVLEQLRERGWQLGAEGSGHILSLDRHSTGDGIVSALLVLAALKRSDRTLAQMLDGVTLFPQKLINVRMKPGADWKGSASIRAAIDAAEGALAGSGRVLIRASGTEPVLRVMVEAQQAADATRHAEAIADAVRMATS.

Ser-107 functions as the Phosphoserine intermediate in the catalytic mechanism. Residues Ser-107, Asp-246, Asp-248, and Asp-250 each contribute to the Mg(2+) site. Ser-107 bears the Phosphoserine mark.

The protein belongs to the phosphohexose mutase family. It depends on Mg(2+) as a cofactor. Activated by phosphorylation.

It catalyses the reaction alpha-D-glucosamine 1-phosphate = D-glucosamine 6-phosphate. Functionally, catalyzes the conversion of glucosamine-6-phosphate to glucosamine-1-phosphate. This is Phosphoglucosamine mutase from Burkholderia ambifaria (strain ATCC BAA-244 / DSM 16087 / CCUG 44356 / LMG 19182 / AMMD) (Burkholderia cepacia (strain AMMD)).